The chain runs to 250 residues: Small ribosomal subunit protein uS2 (250 aa).

This sequence belongs to the universal ribosomal protein uS2 family.

This chain is Small ribosomal subunit protein uS2, found in Albidiferax ferrireducens (strain ATCC BAA-621 / DSM 15236 / T118) (Rhodoferax ferrireducens).